Reading from the N-terminus, the 465-residue chain is UDP-N-acetylmuramate--L-alanine ligase (465 aa).

112-118 (GTHGKTT) lines the ATP pocket.

Belongs to the MurCDEF family.

It localises to the cytoplasm. The enzyme catalyses UDP-N-acetyl-alpha-D-muramate + L-alanine + ATP = UDP-N-acetyl-alpha-D-muramoyl-L-alanine + ADP + phosphate + H(+). It functions in the pathway cell wall biogenesis; peptidoglycan biosynthesis. Cell wall formation. The polypeptide is UDP-N-acetylmuramate--L-alanine ligase (Burkholderia pseudomallei (strain 1106a)).